We begin with the raw amino-acid sequence, 285 residues long: Protein phosphatase 1 regulatory subunit 3B (285 aa).

The short motif at 62-65 is the PP1-binding motif element; it reads RVSF. A CBM21 domain is found at 125–233; sequence RNRLQADHVC…SNRGKNYRII (109 aa). Residue serine 261 is modified to Phosphoserine.

In terms of assembly, interacts with glycogen, PPP1CC catalytic subunit of PP1 and PYGL. Associates with glycogen particles. Forms complexes with debranching enzyme, glycogen phosphorylase, glycogen synthase and phosphorylase kinase which is necessary for its regulation of PP1 activity. Highly expressed in the liver and, at lower levels, in skeletal muscle, including in vastus lateralis, gastrocnemius and soleus (at protein level). Highest mRNA levels are observed in skeletal muscle, and only moderate levels in liver and heart. Weak expression in placenta and lung.

Its function is as follows. Acts as a glycogen-targeting subunit for phosphatase PP1. Facilitates interaction of the PP1 with enzymes of the glycogen metabolism and regulates its activity. Suppresses the rate at which PP1 dephosphorylates (inactivates) glycogen phosphorylase and enhances the rate at which it activates glycogen synthase and therefore limits glycogen breakdown. Its activity is inhibited by PYGL, resulting in inhibition of the glycogen synthase and glycogen phosphorylase phosphatase activities of PP1. Dramatically increases basal and insulin-stimulated glycogen synthesis upon overexpression in hepatocytes. This Homo sapiens (Human) protein is Protein phosphatase 1 regulatory subunit 3B (PPP1R3B).